A 275-amino-acid chain; its full sequence is Large ribosomal subunit protein uL2 (275 aa).

The interval 222–275 (GVAMNPVDHPHGGGEGRNKGRHPTSPWGQKSKGLKTRHNKRTDNMIIRRRAKKK) is disordered. Over residues 229–239 (DHPHGGGEGRN) the composition is skewed to basic and acidic residues.

This sequence belongs to the universal ribosomal protein uL2 family. As to quaternary structure, part of the 50S ribosomal subunit. Forms a bridge to the 30S subunit in the 70S ribosome.

One of the primary rRNA binding proteins. Required for association of the 30S and 50S subunits to form the 70S ribosome, for tRNA binding and peptide bond formation. It has been suggested to have peptidyltransferase activity; this is somewhat controversial. Makes several contacts with the 16S rRNA in the 70S ribosome. In Psychrobacter cryohalolentis (strain ATCC BAA-1226 / DSM 17306 / VKM B-2378 / K5), this protein is Large ribosomal subunit protein uL2.